Reading from the N-terminus, the 338-residue chain is tRNA-specific 2-thiouridylase MnmA (338 aa).

ATP-binding positions include 6–13 (AMSGGVDS) and methionine 32. Cysteine 92 serves as the catalytic Nucleophile. The cysteines at positions 92 and 186 are disulfide-linked. Glycine 116 is an ATP binding site. An interaction with tRNA region spans residues 134-136 (KDQ). The active-site Cysteine persulfide intermediate is the cysteine 186. The segment at 288 to 289 (RY) is interaction with tRNA.

The protein belongs to the MnmA/TRMU family.

It localises to the cytoplasm. It carries out the reaction S-sulfanyl-L-cysteinyl-[protein] + uridine(34) in tRNA + AH2 + ATP = 2-thiouridine(34) in tRNA + L-cysteinyl-[protein] + A + AMP + diphosphate + H(+). In terms of biological role, catalyzes the 2-thiolation of uridine at the wobble position (U34) of tRNA, leading to the formation of s(2)U34. This is tRNA-specific 2-thiouridylase MnmA from Campylobacter jejuni subsp. jejuni serotype O:6 (strain 81116 / NCTC 11828).